The primary structure comprises 423 residues: Glutamate-1-semialdehyde 2,1-aminomutase (423 aa).

Position 259 is an N6-(pyridoxal phosphate)lysine (Lys-259).

The protein belongs to the class-III pyridoxal-phosphate-dependent aminotransferase family. HemL subfamily. Homodimer. Requires pyridoxal 5'-phosphate as cofactor.

The protein localises to the cytoplasm. The enzyme catalyses (S)-4-amino-5-oxopentanoate = 5-aminolevulinate. It participates in porphyrin-containing compound metabolism; protoporphyrin-IX biosynthesis; 5-aminolevulinate from L-glutamyl-tRNA(Glu): step 2/2. This Thermosipho melanesiensis (strain DSM 12029 / CIP 104789 / BI429) protein is Glutamate-1-semialdehyde 2,1-aminomutase.